Consider the following 426-residue polypeptide: C4-dicarboxylate transport protein (426 aa).

8 helical membrane passes run 8–28, 44–64, 78–98, 148–168, 173–193, 222–242, 297–317, and 355–375; these read VLYVQVIVAIIIGIGLGHFYP, LIKMVIGPIIFCTVVTGIAGM, LLYFEIVSTFALVLGLIATHV, GEILQILLIALLFGAVLATAG, VVTGFIDGLSHVLFGIVRIIT, LIGTFYLTSVVFVVVVLGIIA, GYSFNLDGTNIYMTMAVLFIA, and AATLAVVPTIPLSGMVLILGI.

Belongs to the dicarboxylate/amino acid:cation symporter (DAACS) (TC 2.A.23) family.

The protein localises to the cell inner membrane. Functionally, responsible for the transport of dicarboxylates such as succinate, fumarate, and malate from the periplasm across the membrane. The chain is C4-dicarboxylate transport protein from Paraburkholderia xenovorans (strain LB400).